The primary structure comprises 252 residues: F-box/SPRY domain-containing protein 1 (252 aa).

Residues 1 to 48 (MVDPLCNYNVLEAIFSYLELSDLSRCSQVCKSWYHFLNDENSDVWRWH) enclose the F-box domain. Residues 58–250 (IKSDLLASVT…VSMVYLGTPL (193 aa)) enclose the B30.2/SPRY domain.

It belongs to the FBXO45/Fsn family. Component of an E3 ubiquitin ligase complex composed of hiw and Fsn.

The protein localises to the synapse. Its pathway is protein modification; protein ubiquitination. Its function is as follows. Required in the presynaptic motoneuron to down-regulate the levels of wnd and restrain synaptic terminal growth at the neuromuscular junction (NMJ). This is F-box/SPRY domain-containing protein 1 from Drosophila mojavensis (Fruit fly).